A 33-amino-acid polypeptide reads, in one-letter code: Sucrose-6-phosphate hydrolase (33 aa).

15–18 (PLQE) contacts substrate. E18 is an active-site residue.

This sequence belongs to the glycosyl hydrolase 32 family.

The enzyme catalyses Hydrolysis of terminal non-reducing beta-D-fructofuranoside residues in beta-D-fructofuranosides.. It participates in glycan biosynthesis; sucrose metabolism. The protein is Sucrose-6-phosphate hydrolase of Fusobacterium mortiferum.